Here is a 447-residue protein sequence, read N- to C-terminus: UDP-glycosyltransferase 79B10 (447 aa).

Residues serine 260, 319 to 321 (VQQ), 336 to 344 (HCGFGSMWE), and 358 to 361 (LADQ) contribute to the UDP-alpha-D-glucose site.

It belongs to the UDP-glycosyltransferase family.

This is UDP-glycosyltransferase 79B10 (UGT79B10) from Arabidopsis thaliana (Mouse-ear cress).